A 191-amino-acid chain; its full sequence is Iron-sulfur flavoprotein (191 aa).

Positions 47, 50, 53, and 59 each coordinate [4Fe-4S] cluster.

The protein belongs to the SsuE family. Isf subfamily. As to quaternary structure, homodimer. Requires FMN as cofactor. The cofactor is [4Fe-4S] cluster.

In terms of biological role, redox-active protein probably involved in electron transport during fermentation of acetate to methane. This Methanosarcina thermophila protein is Iron-sulfur flavoprotein (isf).